The sequence spans 137 residues: Large-conductance mechanosensitive channel (137 aa).

Helical transmembrane passes span 10-30 and 76-96; these read FAMR…AAFG and GVFI…FVAI.

The protein belongs to the MscL family. In terms of assembly, homopentamer.

It localises to the cell inner membrane. Channel that opens in response to stretch forces in the membrane lipid bilayer. May participate in the regulation of osmotic pressure changes within the cell. This chain is Large-conductance mechanosensitive channel, found in Salmonella choleraesuis (strain SC-B67).